We begin with the raw amino-acid sequence, 245 residues long: Orotidine 5'-phosphate decarboxylase (245 aa).

Residues aspartate 22, lysine 44, 71-80 (DLKFHDIPNT), threonine 131, arginine 192, glutamine 201, glycine 221, and arginine 222 contribute to the substrate site. Residue lysine 73 is the Proton donor of the active site.

This sequence belongs to the OMP decarboxylase family. Type 1 subfamily. Homodimer.

It catalyses the reaction orotidine 5'-phosphate + H(+) = UMP + CO2. It functions in the pathway pyrimidine metabolism; UMP biosynthesis via de novo pathway; UMP from orotate: step 2/2. In terms of biological role, catalyzes the decarboxylation of orotidine 5'-monophosphate (OMP) to uridine 5'-monophosphate (UMP). This is Orotidine 5'-phosphate decarboxylase from Yersinia pseudotuberculosis serotype O:3 (strain YPIII).